Consider the following 207-residue polypeptide: dTTP/UTP pyrophosphatase (207 aa).

Catalysis depends on Asp-87, which acts as the Proton acceptor.

The protein belongs to the Maf family. YhdE subfamily. It depends on a divalent metal cation as a cofactor.

Its subcellular location is the cytoplasm. It catalyses the reaction dTTP + H2O = dTMP + diphosphate + H(+). It carries out the reaction UTP + H2O = UMP + diphosphate + H(+). Its function is as follows. Nucleoside triphosphate pyrophosphatase that hydrolyzes dTTP and UTP. May have a dual role in cell division arrest and in preventing the incorporation of modified nucleotides into cellular nucleic acids. This Bordetella bronchiseptica (strain ATCC BAA-588 / NCTC 13252 / RB50) (Alcaligenes bronchisepticus) protein is dTTP/UTP pyrophosphatase.